The chain runs to 130 residues: Small ribosomal subunit protein uS11c (130 aa).

Belongs to the universal ribosomal protein uS11 family. In terms of assembly, part of the 30S ribosomal subunit.

The protein localises to the plastid. It is found in the chloroplast. The sequence is that of Small ribosomal subunit protein uS11c from Bigelowiella natans (Pedinomonas minutissima).